We begin with the raw amino-acid sequence, 104 residues long: Small ribosomal subunit protein uS10 (104 aa).

It belongs to the universal ribosomal protein uS10 family. Part of the 30S ribosomal subunit.

Its function is as follows. Involved in the binding of tRNA to the ribosomes. The polypeptide is Small ribosomal subunit protein uS10 (Helicobacter pylori (strain P12)).